The primary structure comprises 125 residues: Small ribosomal subunit protein bS6 (125 aa).

It belongs to the bacterial ribosomal protein bS6 family.

In terms of biological role, binds together with bS18 to 16S ribosomal RNA. This chain is Small ribosomal subunit protein bS6 (rpsF), found in Campylobacter jejuni subsp. jejuni serotype O:2 (strain ATCC 700819 / NCTC 11168).